The primary structure comprises 84 residues: Magnetosome protein MamR (84 aa).

It belongs to the magnetosome MamR family.

The protein resides in the magnetosome. May play a role in controlling magnetite number and size but not in control of magnetite morphology. The chain is Magnetosome protein MamR from Paramagnetospirillum magneticum (strain ATCC 700264 / AMB-1) (Magnetospirillum magneticum).